Reading from the N-terminus, the 195-residue chain is ATP-dependent Clp protease proteolytic subunit (195 aa).

Serine 98 (nucleophile) is an active-site residue. Residue histidine 123 is part of the active site.

Belongs to the peptidase S14 family. In terms of assembly, fourteen ClpP subunits assemble into 2 heptameric rings which stack back to back to give a disk-like structure with a central cavity, resembling the structure of eukaryotic proteasomes.

It is found in the cytoplasm. The enzyme catalyses Hydrolysis of proteins to small peptides in the presence of ATP and magnesium. alpha-casein is the usual test substrate. In the absence of ATP, only oligopeptides shorter than five residues are hydrolyzed (such as succinyl-Leu-Tyr-|-NHMec, and Leu-Tyr-Leu-|-Tyr-Trp, in which cleavage of the -Tyr-|-Leu- and -Tyr-|-Trp bonds also occurs).. Its function is as follows. Cleaves peptides in various proteins in a process that requires ATP hydrolysis. Has a chymotrypsin-like activity. Plays a major role in the degradation of misfolded proteins. This Sulfurovum sp. (strain NBC37-1) protein is ATP-dependent Clp protease proteolytic subunit.